The chain runs to 567 residues: DNA ligase (567 aa).

Glu-246 provides a ligand contact to ATP. Residue Lys-248 is the N6-AMP-lysine intermediate of the active site. The ATP site is built by Arg-253, Arg-268, Glu-298, Phe-339, Arg-415, and Lys-421.

The protein belongs to the ATP-dependent DNA ligase family. The cofactor is Mg(2+).

The catalysed reaction is ATP + (deoxyribonucleotide)n-3'-hydroxyl + 5'-phospho-(deoxyribonucleotide)m = (deoxyribonucleotide)n+m + AMP + diphosphate.. Its function is as follows. DNA ligase that seals nicks in double-stranded DNA during DNA replication, DNA recombination and DNA repair. The chain is DNA ligase from Nanoarchaeum equitans (strain Kin4-M).